A 259-amino-acid chain; its full sequence is Transcription factor bHLH125 (259 aa).

The bHLH domain maps to 73–125; it reads SKKMKHRDIERQRRQEVSSLFKRLRTLLPFQYIQGKRSTSDHIVQAVNYIKDL.

As to quaternary structure, homodimer.

The protein resides in the nucleus. The sequence is that of Transcription factor bHLH125 (BHLH125) from Arabidopsis thaliana (Mouse-ear cress).